Consider the following 845-residue polypeptide: Translation initiation factor IF-2 (845 aa).

2 disordered regions span residues K44–S91 and A119–P256. The segment covering A119–L129 has biased composition (basic and acidic residues). Residues D139–P148 show a composition bias toward acidic residues. Polar residues predominate over residues S156–E165. Basic and acidic residues-rich tracts occupy residues I179–S194 and S202–R217. Residues L343–D510 enclose the tr-type G domain. The G1 stretch occupies residues G352–T359. G352–T359 contacts GTP. Residues G377–H381 form a G2 region. The G3 stretch occupies residues D398–G401. GTP is bound by residues D398–H402 and N452–D455. The segment at N452–D455 is G4. Residues S488–K490 form a G5 region.

Belongs to the TRAFAC class translation factor GTPase superfamily. Classic translation factor GTPase family. IF-2 subfamily.

Its subcellular location is the cytoplasm. Its function is as follows. One of the essential components for the initiation of protein synthesis. Protects formylmethionyl-tRNA from spontaneous hydrolysis and promotes its binding to the 30S ribosomal subunits. Also involved in the hydrolysis of GTP during the formation of the 70S ribosomal complex. This Bartonella henselae (strain ATCC 49882 / DSM 28221 / CCUG 30454 / Houston 1) (Rochalimaea henselae) protein is Translation initiation factor IF-2.